We begin with the raw amino-acid sequence, 452 residues long: uncharacterized protein (452 aa).

This is an uncharacterized protein from Chlamydia pneumoniae (Chlamydophila pneumoniae).